The chain runs to 472 residues: Aspartyl/glutamyl-tRNA(Asn/Gln) amidotransferase subunit B (472 aa).

This sequence belongs to the GatB/GatE family. GatB subfamily. Heterotrimer of A, B and C subunits.

The enzyme catalyses L-glutamyl-tRNA(Gln) + L-glutamine + ATP + H2O = L-glutaminyl-tRNA(Gln) + L-glutamate + ADP + phosphate + H(+). The catalysed reaction is L-aspartyl-tRNA(Asn) + L-glutamine + ATP + H2O = L-asparaginyl-tRNA(Asn) + L-glutamate + ADP + phosphate + 2 H(+). Allows the formation of correctly charged Asn-tRNA(Asn) or Gln-tRNA(Gln) through the transamidation of misacylated Asp-tRNA(Asn) or Glu-tRNA(Gln) in organisms which lack either or both of asparaginyl-tRNA or glutaminyl-tRNA synthetases. The reaction takes place in the presence of glutamine and ATP through an activated phospho-Asp-tRNA(Asn) or phospho-Glu-tRNA(Gln). The protein is Aspartyl/glutamyl-tRNA(Asn/Gln) amidotransferase subunit B of Sulfolobus acidocaldarius (strain ATCC 33909 / DSM 639 / JCM 8929 / NBRC 15157 / NCIMB 11770).